Here is a 342-residue protein sequence, read N- to C-terminus: Methyltransferase ungE' (342 aa).

The protein belongs to the methyltransferase superfamily.

It participates in secondary metabolite biosynthesis. Functionally, methyltransferase; part of the gene cluster that mediates the biosynthesis of the unguisins, gamma-aminobutyric acid (GABA)-containing fungal cyclic heptapeptides with the amino acid sequence cyclo-(D-Ala1-D-Val2-L-Leu3-beta-MePhe4-D-Ala5-D-Trp6-GABA7) for unguisin H and cyclo-(D-Ala1-D-Ala2-L-Leu3-beta-MePhe4-D-Ala5-D-Trp6-GABA7) for unguisin I. Within the pathway, the methyltransferase ungE' is probably involved in the synthesis of the (2R,3R)-beta-methylphenylalanine residue incorporated by the module 4 of the nonribosomal peptide synthetase (NRPS) ungA'. The alanine racemase ungC' catalyzes the interconversion of L-alanine and D-alanine, providing the D-alanine which is accepted by the first adenylation domain of ungA'. UngA' is the main enzyme within the cluster which condenses the 7 residues using its respective 7 modules. The terminal condensation domain (Ct) is involved in cyclization with D-alanine and thereby releasing of unguisins H and I. Finally, the hydrolase ungD' catalyzes the hydrolysis between the D-tryptophan and GABA residues of unguisins H and I to produce the corresponding linear peptides. This is Methyltransferase ungE' from Aspergillus campestris (strain IBT 28561).